Reading from the N-terminus, the 150-residue chain is Avidin-related protein 4/5 (150 aa).

Residues 1–24 (MVHTTSPLLLLLLLSLALVAPSLS) form the signal peptide. Residues 26–147 (RKCSLTGKWT…GYNNFTRLCT (122 aa)) form the Avidin-like domain. A disulfide bridge connects residues Cys28 and Cys105. Residues Asn36, Ser40, Tyr57, Thr59, and Asp63 each coordinate biotin. N-linked (GlcNAc...) asparagine glycans are attached at residues Asn67 and Asn93. The biotin site is built by Ser95 and Asn140. N-linked (GlcNAc...) asparagine glycosylation occurs at Asn141.

Belongs to the avidin/streptavidin family. Homotetramer.

The protein resides in the secreted. Forms a strong non-covalent specific complex with biotin. The protein is Avidin-related protein 4/5 (AVR4) of Gallus gallus (Chicken).